Consider the following 497-residue polypeptide: Glycerol kinase (497 aa).

Position 12 (threonine 12) interacts with ADP. Threonine 12, threonine 13, and serine 14 together coordinate ATP. Threonine 12 contributes to the sn-glycerol 3-phosphate binding site. Arginine 16 provides a ligand contact to ADP. Residues arginine 82, glutamate 83, tyrosine 133, and aspartate 243 each coordinate sn-glycerol 3-phosphate. Residues arginine 82, glutamate 83, tyrosine 133, aspartate 243, and glutamine 244 each coordinate glycerol. 2 residues coordinate ADP: threonine 265 and glycine 308. Positions 265, 308, 312, and 409 each coordinate ATP. Glycine 409 serves as a coordination point for ADP.

Belongs to the FGGY kinase family.

The catalysed reaction is glycerol + ATP = sn-glycerol 3-phosphate + ADP + H(+). The protein operates within polyol metabolism; glycerol degradation via glycerol kinase pathway; sn-glycerol 3-phosphate from glycerol: step 1/1. Inhibited by fructose 1,6-bisphosphate (FBP). Its function is as follows. Key enzyme in the regulation of glycerol uptake and metabolism. Catalyzes the phosphorylation of glycerol to yield sn-glycerol 3-phosphate. This Dichelobacter nodosus (strain VCS1703A) protein is Glycerol kinase.